Consider the following 466-residue polypeptide: A-type ATP synthase subunit B (466 aa).

The protein belongs to the ATPase alpha/beta chains family. As to quaternary structure, has multiple subunits with at least A(3), B(3), C, D, E, F, H, I and proteolipid K(x).

It is found in the cell membrane. Its function is as follows. Component of the A-type ATP synthase that produces ATP from ADP in the presence of a proton gradient across the membrane. The B chain is a regulatory subunit. The chain is A-type ATP synthase subunit B from Sulfolobus acidocaldarius (strain ATCC 33909 / DSM 639 / JCM 8929 / NBRC 15157 / NCIMB 11770).